The chain runs to 166 residues: Large ribosomal subunit protein uL10 (166 aa).

It belongs to the universal ribosomal protein uL10 family. As to quaternary structure, part of the ribosomal stalk of the 50S ribosomal subunit. The N-terminus interacts with L11 and the large rRNA to form the base of the stalk. The C-terminus forms an elongated spine to which L12 dimers bind in a sequential fashion forming a multimeric L10(L12)X complex.

Its function is as follows. Forms part of the ribosomal stalk, playing a central role in the interaction of the ribosome with GTP-bound translation factors. The polypeptide is Large ribosomal subunit protein uL10 (Shewanella denitrificans (strain OS217 / ATCC BAA-1090 / DSM 15013)).